Consider the following 208-residue polypeptide: Uracil phosphoribosyltransferase (208 aa).

Residues R78, R103, and 130–138 (DPMLATGGS) contribute to the 5-phospho-alpha-D-ribose 1-diphosphate site. Residues I193 and 198-200 (GDA) each bind uracil. D199 lines the 5-phospho-alpha-D-ribose 1-diphosphate pocket.

The protein belongs to the UPRTase family. Mg(2+) serves as cofactor.

The catalysed reaction is UMP + diphosphate = 5-phospho-alpha-D-ribose 1-diphosphate + uracil. The protein operates within pyrimidine metabolism; UMP biosynthesis via salvage pathway; UMP from uracil: step 1/1. Its activity is regulated as follows. Allosterically activated by GTP. Its function is as follows. Catalyzes the conversion of uracil and 5-phospho-alpha-D-ribose 1-diphosphate (PRPP) to UMP and diphosphate. This chain is Uracil phosphoribosyltransferase, found in Haemophilus influenzae (strain PittEE).